Consider the following 347-residue polypeptide: Phosphoribosylformylglycinamidine cyclo-ligase (347 aa).

This sequence belongs to the AIR synthase family.

Its subcellular location is the cytoplasm. The enzyme catalyses 2-formamido-N(1)-(5-O-phospho-beta-D-ribosyl)acetamidine + ATP = 5-amino-1-(5-phospho-beta-D-ribosyl)imidazole + ADP + phosphate + H(+). It participates in purine metabolism; IMP biosynthesis via de novo pathway; 5-amino-1-(5-phospho-D-ribosyl)imidazole from N(2)-formyl-N(1)-(5-phospho-D-ribosyl)glycinamide: step 2/2. This chain is Phosphoribosylformylglycinamidine cyclo-ligase, found in Alkalilimnicola ehrlichii (strain ATCC BAA-1101 / DSM 17681 / MLHE-1).